The chain runs to 401 residues: Glyceraldehyde-3-phosphate dehydrogenase A, chloroplastic (401 aa).

The transit peptide at 1–65 (MASNMLSIAN…RSSQNGVVEA (65 aa)) directs the protein to the chloroplast. Residues 76–77 (RI), Asp100, and Arg145 each bind NADP(+). D-glyceraldehyde 3-phosphate-binding positions include 217–219 (SCT), Thr248, Arg263, 276–277 (TG), and Arg299. The active-site Nucleophile is Cys218. Residue Asn381 participates in NADP(+) binding.

It belongs to the glyceraldehyde-3-phosphate dehydrogenase family. As to quaternary structure, tetramer of either four A chains (GAPDH 2) or two A and two B chains (GAPDH 1).

The protein resides in the plastid. It localises to the chloroplast. It catalyses the reaction D-glyceraldehyde 3-phosphate + phosphate + NADP(+) = (2R)-3-phospho-glyceroyl phosphate + NADPH + H(+). The protein operates within carbohydrate biosynthesis; Calvin cycle. The chain is Glyceraldehyde-3-phosphate dehydrogenase A, chloroplastic (GAPA) from Spinacia oleracea (Spinach).